The primary structure comprises 458 residues: Flavohemoprotein (458 aa).

One can recognise a Globin domain in the interval 2 to 158 (TLSEDTLRAV…LADLFIKREE (157 aa)). Residue His-107 coordinates heme b. Residues Tyr-117 and Glu-157 each act as charge relay system in the active site. The segment at 169–457 (GGWRQTRTFR…FEMFGPFKAS (289 aa)) is reductase. Positions 172–279 (RQTRTFRVEE…APPYGDFFLR (108 aa)) constitute an FAD-binding FR-type domain. FAD is bound by residues Tyr-211 and 228–231 (RQYS). NADP(+) is bound at residue 321–326 (GIGQTP). Position 450–453 (450–453 (MFGP)) interacts with FAD.

It belongs to the globin family. Two-domain flavohemoproteins subfamily. The protein in the C-terminal section; belongs to the flavoprotein pyridine nucleotide cytochrome reductase family. As to quaternary structure, monomer. Heme b serves as cofactor. It depends on FAD as a cofactor.

It catalyses the reaction 2 nitric oxide + NADPH + 2 O2 = 2 nitrate + NADP(+) + H(+). The catalysed reaction is 2 nitric oxide + NADH + 2 O2 = 2 nitrate + NAD(+) + H(+). In terms of biological role, flavohemoprotein involved in nitric oxide (NO) detoxification in an aerobic process, termed nitric oxide dioxygenase (NOD) reaction that utilizes O(2) and NAD(P)H to convert NO to nitrate, which protects the protozoan parasite from various noxious nitrogen compounds. Therefore, plays a central role in the inducible response to nitrosative stress. May also be involved in O(2) detoxification. This chain is Flavohemoprotein (hmpA), found in Giardia intestinalis (strain ATCC 50803 / WB clone C6) (Giardia lamblia).